The primary structure comprises 119 residues: Anamorsin homolog (119 aa).

Positions 1-15 (MSSSATSTQAFSLKT) are enriched in polar residues. Disordered regions lie at residues 1-21 (MSSSATSTQAFSLKTRQPIPD) and 33-119 (LKQA…TDDV). [2Fe-2S] cluster is bound by residues cysteine 42, cysteine 49, cysteine 52, and cysteine 54. The interval 42–54 (CTTRRRACKNCVC) is fe-S binding site A. Residues cysteine 81, cysteine 84, cysteine 92, and cysteine 95 each contribute to the [4Fe-4S] cluster site. Short sequence motifs (cx2C motif) lie at residues 81-84 (CGNC) and 92-95 (CANC). The segment at 81-95 (CGNCSKGDAFRCANC) is fe-S binding site B.

This sequence belongs to the anamorsin family. Monomer. The cofactor is [2Fe-2S] cluster. Requires [4Fe-4S] cluster as cofactor.

It is found in the cytoplasm. It localises to the mitochondrion intermembrane space. Its function is as follows. Component of the cytosolic iron-sulfur (Fe-S) protein assembly (CIA) machinery. Required for the maturation of extramitochondrial Fe-S proteins. Part of an electron transfer chain functioning in an early step of cytosolic Fe-S biogenesis, facilitating the de novo assembly of a [4Fe-4S] cluster on the cytosolic Fe-S scaffold complex. Electrons are transferred from NADPH via a FAD- and FMN-containing diflavin oxidoreductase. Together with the diflavin oxidoreductase, also required for the assembly of the diferric tyrosyl radical cofactor of ribonucleotide reductase (RNR), probably by providing electrons for reduction during radical cofactor maturation in the catalytic small subunit. The chain is Anamorsin homolog from Leishmania infantum.